Here is a 457-residue protein sequence, read N- to C-terminus: COBRA-like protein 3 (457 aa).

An N-terminal signal peptide occupies residues 1–35; it reads MAVGGAGSSRSVAPCCCCAVLLAAALLFSAPATTE. N-linked (GlcNAc...) asparagine glycosylation is found at asparagine 45, asparagine 170, asparagine 178, asparagine 217, asparagine 242, asparagine 258, asparagine 326, asparagine 341, and asparagine 361. The GPI-anchor amidated asparagine moiety is linked to residue asparagine 430. A propeptide spans 431 to 457 (removed in mature form); the sequence is ASPLTKQPLTLSVLVFSIVLATLLAYA. Residues 437-457 traverse the membrane as a helical segment; the sequence is QPLTLSVLVFSIVLATLLAYA.

This sequence belongs to the COBRA family.

The protein localises to the cell membrane. Its function is as follows. Involved in determining the orientation of cell expansion, probably by playing an important role in cellulose deposition. May act by recruiting cellulose synthesizing complexes to discrete positions on the cell surface. The sequence is that of COBRA-like protein 3 (BC1L4) from Oryza sativa subsp. japonica (Rice).